We begin with the raw amino-acid sequence, 325 residues long: Olfactory receptor 5T18 (325 aa).

Residues 1–22 lie on the Extracellular side of the membrane; that stretch reads MRNITEATFFVLKGLTDNNELQ. N-linked (GlcNAc...) asparagine glycosylation is present at Asn3. Transmembrane regions (helical) follow at residues 23 to 43 and 44 to 64; these read IILF…NVGL and IILV…LSVL. At 65–97 the chain is on the extracellular side; sequence SSVDACYSTDITPNMLVGFMSKSKIISFYGCAT. Cys95 and Cys187 are oxidised to a cystine. The helical transmembrane segment at 98 to 118 threads the bilayer; it reads QMFLAVTFGTTECFLLAAMAY. Residues 119–139 are Cytoplasmic-facing; it reads DRYVAIHDPLLYAVSMSPRVY. The helical transmembrane segment at 140-160 threads the bilayer; the sequence is IPLIIASYAGGIVHAIIHTVA. The Extracellular portion of the chain corresponds to 161 to 194; the sequence is TFSLSFCRSNEVKHIFCDIPPLLAISCSETYVNE. A helical transmembrane segment spans residues 195–215; sequence LLLFFFVSFIELVTILIVLVS. Residues 216 to 234 are Cytoplasmic-facing; it reads YAFILLSILKMNSSEGRRK. Residues 235-255 traverse the membrane as a helical segment; the sequence is VFSTCGAHLTAVSIYYGTILF. Residues 256 to 269 are Extracellular-facing; that stretch reads MYVRPSSNYSLEHD. The helical transmembrane segment at 270 to 290 threads the bilayer; it reads MIVSTFYTIGIPMLNPIIYSL. The Cytoplasmic portion of the chain corresponds to 291 to 325; that stretch reads RNKDVKEAMKRVLRKKINIKHRIKKLNDFSVFLMP.

Belongs to the G-protein coupled receptor 1 family.

The protein localises to the cell membrane. Its function is as follows. Potential odorant receptor. The chain is Olfactory receptor 5T18 from Mus musculus (Mouse).